The chain runs to 773 residues: Transducin-like enhancer protein 4 (773 aa).

Disordered regions lie at residues 1 to 22 (MIRD…QPAQ), 140 to 162 (HGHG…AIPP), and 182 to 357 (LPIK…DPLA). Residues 1-136 (MIRDLSKMYP…AIIGQQLQAQ (136 aa)) are q domain. A GP domain region spans residues 137–204 (HLSHGHGLPV…HQRDRDSIKS (68 aa)). The span at 183–202 (PIKDEKKHHDNDHQRDRDSI) shows a compositional bias: basic and acidic residues. The segment covering 203 to 214 (KSSSVSPSASFR) has biased composition (low complexity). Residues 205–274 (SSVSPSASFR…SPRGSPAHSP (70 aa)) are ccN domain. S208, S212, S216, and S222 each carry phosphoserine. Residues 215–252 (GSEKHRNSTDYSSESKKQKTEEKEIAARYDSDGEKSDD) show a composition bias toward basic and acidic residues. At K237 the chain carries N6-acetyllysine. S245 bears the Phosphoserine mark. S250 carries the post-translational modification Phosphoserine; by CK2. S265 carries the phosphoserine; by CDK1 modification. Residues S269 and S273 each carry the phosphoserine modification. The segment covering 273–289 (SPRENGLDKTRLLKKDA) has biased composition (basic and acidic residues). Residues 275–452 (RENGLDKTRL…PGGKPAYSFH (178 aa)) are SP domain. N6-acetyllysine is present on K281. The segment covering 290–305 (PISPASVASSSSTPSS) has biased composition (low complexity). S292 is subject to Phosphoserine. Over residues 317-328 (TTPVSKSNTPTP) the composition is skewed to polar residues. The residue at position 318 (T318) is a Phosphothreonine. S321 and S323 each carry phosphoserine. T325, T327, T334, and T340 each carry phosphothreonine. S419 bears the Phosphoserine mark. WD repeat units lie at residues 485–523 (NHGE…NKSP), 531–570 (NRDN…PRIK), 575–614 (SSAP…LVRQ), 617–656 (GHTD…QLQQ), 658–697 (DFTS…KYQL), 699–738 (LHES…SIFQ), and 740–773 (KESS…EVIY).

It belongs to the WD repeat Groucho/TLE family. Homooligomer and heterooligomer with other family members. Interacts with PAX5. Interacts with LEF1, TCF7, TCF7L1 and TCF7L2. Interacts with ZNF703; TLE4 may mediate ZNF703 transcriptional repression. Interacts with SIX3 and SIX6. Interacts with PAX2. Interacts with TLE1. Phosphorylated. PAX5 binding increases phosphorylation. Post-translationally, ubiquitinated by XIAP/BIRC4. As to expression, expressed in bone marrow-derived macrophages.

Its subcellular location is the nucleus. Its function is as follows. Transcriptional corepressor that binds to a number of transcription factors. Inhibits the transcriptional activation mediated by PAX5, and by CTNNB1 and TCF family members in Wnt signaling. The effects of full-length TLE family members may be modulated by association with dominant-negative AES. Essential for the transcriptional repressor activity of SIX3 during retina and lens development and for SIX3 transcriptional auto-repression. Involved in transcriptional repression of GNRHR and enhances MSX1-mediated transcriptional repression of CGA/alpha-GSU. This Mus musculus (Mouse) protein is Transducin-like enhancer protein 4 (Tle4).